Reading from the N-terminus, the 356-residue chain is MSKIIDIKTSIIKIPLKRTFITAVRSTNHIDSLAVELTLDNGVKGYGVAPATTAITGDTLQGMQYIIREIFAPVILGSDLSDYKQTLELAFKKVMFNSAAKMAIDLAYHDLLAKEQDISVAKLLGAKANSIVTDVSISCGNVAETIQNIQNGVEANFTAIKVKTGADFNRDIQLLKALDNEFSKNIKFRFDANQGWNLAQTKQFIEEINKYSLNVEIIEQPVKYYDIKAMAEITKFSNIPVVADESVFDAKDAERVIDEQACNMINIKLAKTGGILEAQKIKKLADSAGISCMVGCMMESPAGILATASFALAEDITVADLDPLDWVAKDLYSDYITFNEPNIILKDNLKGFGFNL.

Residues Arg-25, Ser-136, and 161-163 each bind substrate; that span reads KVK. Residue Asp-191 participates in Mg(2+) binding. Asn-193 is a substrate binding site. Mg(2+) contacts are provided by Glu-219 and Asp-244. Substrate contacts are provided by residues Lys-268, 296-298, and 320-322; these read CMM and DLD.

This sequence belongs to the mandelate racemase/muconate lactonizing enzyme family. It depends on Mg(2+) as a cofactor.

Functionally, catalyzes the epimerization of dipeptides with L-Glu in the second position. Has epimerase activity with L-Ala-L-Glu, L-Pro-L-Glu, L-Val-L-Glu, L-Thr-L-Glu and L-Met-L-Glu (in vitro). The protein is L-amino acid-D/L-Glu epimerase of Francisella philomiragia subsp. philomiragia (strain ATCC 25017 / CCUG 19701 / FSC 153 / O#319-036).